The primary structure comprises 1388 residues: Rho-associated protein kinase 2 (1388 aa).

Positions 1-24 (MSRPPPTGKMPGAPEAAAGDGAGA) are disordered. The Protein kinase domain occupies 92–354 (YDVVKVIGRG…VEEIKSASFF (263 aa)). Residues 98-106 (IGRGAFGEV) and K121 contribute to the ATP site. Residue D214 is the Proton acceptor of the active site. An AGC-kinase C-terminal domain is found at 357–425 (DQWNWDNIRE…FRENLLLSDS (69 aa)). Residues 363 to 784 (NIRETAAPVV…LNELLKQKDV (422 aa)) are interaction with PPP1R12A. The interval 373-420 (PELSSDIDSSNFDDIEDDKGDVETFPIPKAFVGNQLPFIGFTYFRENL) is interaction with NPM1. Position 414 is a phosphothreonine; by ROCK2 (T414). Coiled-coil stretches lie at residues 439 to 1024 (SEES…EKQL) and 1052 to 1131 (SDTD…IGMD). Residues 497–573 (TLRQLEREKA…LDEANALLRT (77 aa)) form the REM-1 domain. Over residues 513 to 530 (AEYQRKADHEADKKRNLE) the composition is skewed to basic and acidic residues. A disordered region spans residues 513–532 (AEYQRKADHEADKKRNLEND). Y722 bears the Phosphotyrosine; by SRC mark. The RhoBD domain occupies 979–1047 (TSDVANLANE…LAEIMNRKEP (69 aa)). Positions 979-1047 (TSDVANLANE…LAEIMNRKEP (69 aa)) are RHOA binding. Position 1137 is a phosphoserine (S1137). A PH domain is found at 1150 to 1349 (ESRLEGWLSL…WVSRLVKKIP (200 aa)). The residue at position 1212 (T1212) is a Phosphothreonine. A Phorbol-ester/DAG-type zinc finger spans residues 1260-1315 (GHEFIPTLYHFPTNCEACMKPLWHMFKPPPALECSRCHIKCHKDHMDKKEEIIAPC). The interval 1345–1388 (VKKIPKKPPAPDPFARSSPRTSMKIQQNQSIRRPSRQLAPNKPS) is disordered. S1362 and S1374 each carry phosphoserine. The span at 1362–1376 (SPRTSMKIQQNQSIR) shows a compositional bias: polar residues.

Belongs to the protein kinase superfamily. AGC Ser/Thr protein kinase family. Homodimer. Interacts with IRS1. Interacts with RAF1. Interacts with RHOA (activated by GTP), RHOB, RHOC. Interacts with PPP1R12A. Interacts with EP300. Interacts with CHORDC1. Interacts with BRCA2. Interacts with NPM1; this interaction enhances its activity. Interacts with SORL1. Interacts with PJVK. Mg(2+) serves as cofactor. Post-translationally, autophosphorylated. Phosphorylation at Tyr-722 reduces its binding to RHOA and is crucial for focal adhesion dynamics. Dephosphorylation by PTPN11 stimulates its RHOA binding activity. In terms of processing, cleaved by granzyme B during apoptosis. This leads to constitutive activation of the kinase and membrane blebbing. As to expression, highly expressed in brain, lung, liver, skeletal muscle, kidney and testis.

The protein localises to the cytoplasm. It localises to the cell membrane. The protein resides in the nucleus. Its subcellular location is the cytoskeleton. It is found in the microtubule organizing center. The protein localises to the centrosome. The catalysed reaction is L-seryl-[protein] + ATP = O-phospho-L-seryl-[protein] + ADP + H(+). It catalyses the reaction L-threonyl-[protein] + ATP = O-phospho-L-threonyl-[protein] + ADP + H(+). With respect to regulation, activated by RHOA binding. Inhibited by Y-27632. Its function is as follows. Protein kinase which is a key regulator of actin cytoskeleton and cell polarity. Involved in regulation of smooth muscle contraction, actin cytoskeleton organization, stress fiber and focal adhesion formation, neurite retraction, cell adhesion and motility via phosphorylation of ADD1, BRCA2, CNN1, EZR, DPYSL2, EP300, MSN, MYL9/MLC2, NPM1, RDX, PPP1R12A and VIM. Phosphorylates SORL1 and IRF4. Acts as a negative regulator of VEGF-induced angiogenic endothelial cell activation. Positively regulates the activation of p42/MAPK1-p44/MAPK3 and of p90RSK/RPS6KA1 during myogenic differentiation. Plays an important role in the timely initiation of centrosome duplication. Inhibits keratinocyte terminal differentiation. May regulate closure of the eyelids and ventral body wall through organization of actomyosin bundles. Plays a critical role in the regulation of spine and synaptic properties in the hippocampus. Plays a role in placental homeostasis during the perinatal period. Plays an important role in generating the circadian rhythm of the aortic myofilament Ca(2+) sensitivity and vascular contractility by modulating the myosin light chain phosphorylation. This chain is Rho-associated protein kinase 2 (Rock2), found in Rattus norvegicus (Rat).